A 179-amino-acid polypeptide reads, in one-letter code: Small ribosomal subunit protein uS5 (179 aa).

Residues 22 to 85 (MIEKLVAVNR…EYARKTMANV (64 aa)) enclose the S5 DRBM domain.

This sequence belongs to the universal ribosomal protein uS5 family. As to quaternary structure, part of the 30S ribosomal subunit. Contacts proteins S4 and S8.

With S4 and S12 plays an important role in translational accuracy. In terms of biological role, located at the back of the 30S subunit body where it stabilizes the conformation of the head with respect to the body. In Xylella fastidiosa (strain 9a5c), this protein is Small ribosomal subunit protein uS5.